A 399-amino-acid chain; its full sequence is Accessory Sec system protein translocase subunit SecY2 (399 aa).

The next 10 membrane-spanning stretches (helical) occupy residues 14–34 (ILFT…SIVG), 60–80 (LNVF…IMLL), 102–122 (IITI…YIHN), 128–148 (SNII…VWLA), 152–172 (ITYG…KSLF), 184–204 (VLLL…LLFI), 238–258 (ISIM…NLIA), 272–292 (FANP…SYLL), 335–355 (WTGA…TLLV), and 362–382 (IYFS…GETI).

This sequence belongs to the SecY/SEC61-alpha family. SecY2 subfamily. As to quaternary structure, component of the accessory SecA2/SecY2 protein translocase complex required to export cell wall proteins. May form heterotrimers with SecE and SecG subunits.

Its subcellular location is the cell membrane. Functionally, part of the accessory SecA2/SecY2 system specifically required for export of possible cell wall proteins. The central subunit of a protein translocation channel. This Staphylococcus haemolyticus (strain JCSC1435) protein is Accessory Sec system protein translocase subunit SecY2.